Consider the following 799-residue polypeptide: MRIPLSWLKEYIDLNLEPVEIAKILTMAGLEVDGYEEIGKGFSGVIVGDVLEVEKHPNADKLLIALVSDGKEIHQVVCGASNCRKGLKTAFAPVGASLIDEGKEFKIKKGKLRGIESNGMLCSAKELQISNEDDGIMELSEHLQAGTALNTLYSDTIFEISLTPNLGHCASIVGVARELSAATSHPLRYPHLVFKEEGNLINNSLTLDIEAKEACSRYTCRVIKNVKVGASPDWLKAKIEKSGLRSVNNIVDVTNYVLLEMGHPLHAFDYDLVKGKKIVVRMAQEGEIFETLDGKERILKDSHLVIADSEKPIAIAGVMGGRNSEVSEKTTNIILESAFFDPIFVRKTSKQLGLQTDASKRFERGTDPNQLISVLNRAAMLIQMVAGGIIEDSILDEQTKDFLELTIRCRLSRINQILGTTLSRGEVETIFQSLGFHYQWDGQDSFMVCVPTYRTDVKEEIDLIEEVARIYGYDHIPRNGGRYQTSKLPDAPIYLFEKEIQSYLIAEGLQEFITCDLIGPTLVNVVQNLSMPAEAIVKVLNPTSIEQSILRTSLLPGLLQVVKYNLDHQNHQINGFEIGRIHFKDGDQYQEQSVVGILLSGFSQPYHFEEKKREYDFYDLKGIIENLLKELGIEKPQFKNLDLKTFHSGRQASLFVDELEVGSFGEVHPSIQRRLDVSQRILFGEFNLHDLMQVATKLEKVKPLAIYPGSERDWTFTIKTSVPFAEIIKAIHEQKSDLLENVLLLDIYRSEKLTVGHQNMTLRFIYRDFSKTIAQEVVENEHQRLKTAVSQKFANDLKQ.

Positions 39-150 (GKGFSGVIVG…EHLQAGTALN (112 aa)) constitute a tRNA-binding domain. The B5 domain maps to 402–478 (FLELTIRCRL…RIYGYDHIPR (77 aa)). Residues D456, D462, E465, and E466 each coordinate Mg(2+). The 94-residue stretch at 705–798 (AIYPGSERDW…VSQKFANDLK (94 aa)) folds into the FDX-ACB domain.

It belongs to the phenylalanyl-tRNA synthetase beta subunit family. Type 1 subfamily. As to quaternary structure, tetramer of two alpha and two beta subunits. Mg(2+) serves as cofactor.

It localises to the cytoplasm. The catalysed reaction is tRNA(Phe) + L-phenylalanine + ATP = L-phenylalanyl-tRNA(Phe) + AMP + diphosphate + H(+). The polypeptide is Phenylalanine--tRNA ligase beta subunit (Protochlamydia amoebophila (strain UWE25)).